A 197-amino-acid polypeptide reads, in one-letter code: C-type lectin domain family 3 member A (197 aa).

An N-terminal signal peptide occupies residues 1 to 24 (MAKNGLVIYILVITLLLDQTSCHA). 3 cysteine pairs are disulfide-bonded: Cys-68/Cys-78, Cys-95/Cys-191, and Cys-167/Cys-183. The C-type lectin domain maps to 74–192 (FHKKCYLAAE…CHSSKRYICE (119 aa)).

The protein localises to the secreted. Its function is as follows. Promotes cell adhesion to laminin and fibronectin. The polypeptide is C-type lectin domain family 3 member A (CLEC3A) (Bos taurus (Bovine)).